Here is a 218-residue protein sequence, read N- to C-terminus: Octanoyltransferase (218 aa).

Residues 32 to 214 (VLTADEIWLV…HFTQLLGYND (183 aa)) form the BPL/LPL catalytic domain. Substrate contacts are provided by residues 71–78 (RGGQITYH), 143–145 (SLG), and 156–158 (GLA). The active-site Acyl-thioester intermediate is the Cys-174.

The protein belongs to the LipB family.

The protein localises to the cytoplasm. The catalysed reaction is octanoyl-[ACP] + L-lysyl-[protein] = N(6)-octanoyl-L-lysyl-[protein] + holo-[ACP] + H(+). It participates in protein modification; protein lipoylation via endogenous pathway; protein N(6)-(lipoyl)lysine from octanoyl-[acyl-carrier-protein]: step 1/2. Catalyzes the transfer of endogenously produced octanoic acid from octanoyl-acyl-carrier-protein onto the lipoyl domains of lipoate-dependent enzymes. Lipoyl-ACP can also act as a substrate although octanoyl-ACP is likely to be the physiological substrate. The polypeptide is Octanoyltransferase (Histophilus somni (strain 2336) (Haemophilus somnus)).